Reading from the N-terminus, the 355-residue chain is tRNA pseudouridine synthase D (355 aa).

Asp-84 acts as the Nucleophile in catalysis. The TRUD domain occupies 160–306; that stretch reads GVPNYFGLQR…MAHERRILRL (147 aa).

It belongs to the pseudouridine synthase TruD family.

It catalyses the reaction uridine(13) in tRNA = pseudouridine(13) in tRNA. Responsible for synthesis of pseudouridine from uracil-13 in transfer RNAs. The sequence is that of tRNA pseudouridine synthase D from Pseudomonas aeruginosa (strain UCBPP-PA14).